The chain runs to 255 residues: Triosephosphate isomerase (255 aa).

9 to 11 (NWK) is a substrate binding site. Catalysis depends on His95, which acts as the Electrophile. Glu167 acts as the Proton acceptor in catalysis. Substrate-binding positions include Gly173, Ser212, and 233–234 (GG).

It belongs to the triosephosphate isomerase family. Homodimer.

It is found in the cytoplasm. The catalysed reaction is D-glyceraldehyde 3-phosphate = dihydroxyacetone phosphate. It participates in carbohydrate biosynthesis; gluconeogenesis. The protein operates within carbohydrate degradation; glycolysis; D-glyceraldehyde 3-phosphate from glycerone phosphate: step 1/1. Functionally, involved in the gluconeogenesis. Catalyzes stereospecifically the conversion of dihydroxyacetone phosphate (DHAP) to D-glyceraldehyde-3-phosphate (G3P). The sequence is that of Triosephosphate isomerase from Yersinia pseudotuberculosis serotype O:1b (strain IP 31758).